The primary structure comprises 416 residues: Serine hydroxymethyltransferase (416 aa).

(6S)-5,6,7,8-tetrahydrofolate-binding positions include leucine 118 and 122–124 (GHL). Position 226 is an N6-(pyridoxal phosphate)lysine (lysine 226). (6S)-5,6,7,8-tetrahydrofolate is bound by residues glutamate 242 and 350-352 (SPF).

It belongs to the SHMT family. Homodimer. Requires pyridoxal 5'-phosphate as cofactor.

Its subcellular location is the cytoplasm. The catalysed reaction is (6R)-5,10-methylene-5,6,7,8-tetrahydrofolate + glycine + H2O = (6S)-5,6,7,8-tetrahydrofolate + L-serine. It participates in one-carbon metabolism; tetrahydrofolate interconversion. It functions in the pathway amino-acid biosynthesis; glycine biosynthesis; glycine from L-serine: step 1/1. Its function is as follows. Catalyzes the reversible interconversion of serine and glycine with tetrahydrofolate (THF) serving as the one-carbon carrier. This reaction serves as the major source of one-carbon groups required for the biosynthesis of purines, thymidylate, methionine, and other important biomolecules. Also exhibits THF-independent aldolase activity toward beta-hydroxyamino acids, producing glycine and aldehydes, via a retro-aldol mechanism. In Helicobacter pylori (strain Shi470), this protein is Serine hydroxymethyltransferase.